Here is a 124-residue protein sequence, read N- to C-terminus: MPTINQLVRKGRSPKVAKTKAPALKNNPMRRGVCTRVYTTTPKKPNSALRKVARVRLAGGIEVTAYIPGVGHNLQEHSIVLVRGGRVKDLPGVRYKIVRGSLDTQGVKNRKQARSKYGAKMEKK.

Asp-89 bears the 3-methylthioaspartic acid mark. The interval 105–124 (QGVKNRKQARSKYGAKMEKK) is disordered.

Belongs to the universal ribosomal protein uS12 family. As to quaternary structure, part of the 30S ribosomal subunit. Contacts proteins S8 and S17. May interact with IF1 in the 30S initiation complex.

With S4 and S5 plays an important role in translational accuracy. Its function is as follows. Interacts with and stabilizes bases of the 16S rRNA that are involved in tRNA selection in the A site and with the mRNA backbone. Located at the interface of the 30S and 50S subunits, it traverses the body of the 30S subunit contacting proteins on the other side and probably holding the rRNA structure together. The combined cluster of proteins S8, S12 and S17 appears to hold together the shoulder and platform of the 30S subunit. This chain is Small ribosomal subunit protein uS12, found in Renibacterium salmoninarum (strain ATCC 33209 / DSM 20767 / JCM 11484 / NBRC 15589 / NCIMB 2235).